Reading from the N-terminus, the 353-residue chain is Protein RecA (353 aa).

74 to 81 (GPESSGKT) lines the ATP pocket.

The protein belongs to the RecA family.

It is found in the cytoplasm. Its function is as follows. Can catalyze the hydrolysis of ATP in the presence of single-stranded DNA, the ATP-dependent uptake of single-stranded DNA by duplex DNA, and the ATP-dependent hybridization of homologous single-stranded DNAs. It interacts with LexA causing its activation and leading to its autocatalytic cleavage. This chain is Protein RecA, found in Bordetella bronchiseptica (strain ATCC BAA-588 / NCTC 13252 / RB50) (Alcaligenes bronchisepticus).